A 329-amino-acid polypeptide reads, in one-letter code: GTPase Obg (329 aa).

Residues 1–159 (MQFIDEAKIF…MWVWLHLKLL (159 aa)) form the Obg domain. The OBG-type G domain maps to 160–327 (SDVGLVGLPN…LLANILSELQ (168 aa)). Residues 166–173 (GLPNAGKS), 191–195 (FTTLT), 212–215 (DIPG), 279–282 (TKTD), and 308–310 (SSY) contribute to the GTP site. Mg(2+)-binding residues include Ser-173 and Thr-193.

It belongs to the TRAFAC class OBG-HflX-like GTPase superfamily. OBG GTPase family. In terms of assembly, monomer. Requires Mg(2+) as cofactor.

The protein localises to the cytoplasm. Functionally, an essential GTPase which binds GTP, GDP and possibly (p)ppGpp with moderate affinity, with high nucleotide exchange rates and a fairly low GTP hydrolysis rate. Plays a role in control of the cell cycle, stress response, ribosome biogenesis and in those bacteria that undergo differentiation, in morphogenesis control. The protein is GTPase Obg of Orientia tsutsugamushi (strain Ikeda) (Rickettsia tsutsugamushi).